The sequence spans 729 residues: DNA topoisomerase 3 (729 aa).

The Toprim domain maps to 3–136 (KSVVIAEKPS…IKRLWISSVT (134 aa)). Mg(2+) is bound by residues Glu-9 and Asp-105. One can recognise a Topo IA-type catalytic domain in the interval 153 to 594 (YDNLYASAVA…EMKNYTKEIV (442 aa)). The segment at 187-192 (NCGRVQ) is interaction with DNA. The active-site O-(5'-phospho-DNA)-tyrosine intermediate is the Tyr-310. Residues 686–713 (ERRKKESGNKADKRDVQKYMKQQKKEEE) show a composition bias toward basic and acidic residues. Positions 686 to 718 (ERRKKESGNKADKRDVQKYMKQQKKEEEPLNNP) are disordered.

This sequence belongs to the type IA topoisomerase family. Mg(2+) serves as cofactor.

The enzyme catalyses ATP-independent breakage of single-stranded DNA, followed by passage and rejoining.. In terms of biological role, releases the supercoiling and torsional tension of DNA, which is introduced during the DNA replication and transcription, by transiently cleaving and rejoining one strand of the DNA duplex. Introduces a single-strand break via transesterification at a target site in duplex DNA. The scissile phosphodiester is attacked by the catalytic tyrosine of the enzyme, resulting in the formation of a DNA-(5'-phosphotyrosyl)-enzyme intermediate and the expulsion of a 3'-OH DNA strand. The free DNA strand then undergoes passage around the unbroken strand, thus removing DNA supercoils. Finally, in the religation step, the DNA 3'-OH attacks the covalent intermediate to expel the active-site tyrosine and restore the DNA phosphodiester backbone. The polypeptide is DNA topoisomerase 3 (Bacillus cereus (strain ATCC 10987 / NRS 248)).